The sequence spans 406 residues: Arginine biosynthesis bifunctional protein ArgJ (406 aa).

Substrate contacts are provided by Thr-156, Lys-182, Thr-193, Glu-279, Asn-401, and Thr-406. Thr-193 functions as the Nucleophile in the catalytic mechanism.

It belongs to the ArgJ family. In terms of assembly, heterotetramer of two alpha and two beta chains.

The protein localises to the cytoplasm. It catalyses the reaction N(2)-acetyl-L-ornithine + L-glutamate = N-acetyl-L-glutamate + L-ornithine. The catalysed reaction is L-glutamate + acetyl-CoA = N-acetyl-L-glutamate + CoA + H(+). It functions in the pathway amino-acid biosynthesis; L-arginine biosynthesis; L-ornithine and N-acetyl-L-glutamate from L-glutamate and N(2)-acetyl-L-ornithine (cyclic): step 1/1. The protein operates within amino-acid biosynthesis; L-arginine biosynthesis; N(2)-acetyl-L-ornithine from L-glutamate: step 1/4. Its activity is regulated as follows. Feedback inhibition by L-arginine. In terms of biological role, catalyzes two activities which are involved in the cyclic version of arginine biosynthesis: the synthesis of N-acetylglutamate from glutamate and acetyl-CoA as the acetyl donor, and of ornithine by transacetylation between N(2)-acetylornithine and glutamate. The sequence is that of Arginine biosynthesis bifunctional protein ArgJ from Bacillus amyloliquefaciens (Bacillus velezensis).